The following is a 289-amino-acid chain: 4-diphosphocytidyl-2-C-methyl-D-erythritol kinase (289 aa).

The active site involves Lys-10. 94-104 (PVAAGLAGGSS) provides a ligand contact to ATP. Asp-136 is an active-site residue.

The protein belongs to the GHMP kinase family. IspE subfamily.

The enzyme catalyses 4-CDP-2-C-methyl-D-erythritol + ATP = 4-CDP-2-C-methyl-D-erythritol 2-phosphate + ADP + H(+). It participates in isoprenoid biosynthesis; isopentenyl diphosphate biosynthesis via DXP pathway; isopentenyl diphosphate from 1-deoxy-D-xylulose 5-phosphate: step 3/6. In terms of biological role, catalyzes the phosphorylation of the position 2 hydroxy group of 4-diphosphocytidyl-2C-methyl-D-erythritol. The protein is 4-diphosphocytidyl-2-C-methyl-D-erythritol kinase of Bacillus pumilus (strain SAFR-032).